The chain runs to 740 residues: 1,4-alpha-glucan branching enzyme GlgB (740 aa).

Aspartate 419 acts as the Nucleophile in catalysis. Residue glutamate 472 is the Proton donor of the active site.

It belongs to the glycosyl hydrolase 13 family. GlgB subfamily. Monomer.

The enzyme catalyses Transfers a segment of a (1-&gt;4)-alpha-D-glucan chain to a primary hydroxy group in a similar glucan chain.. It functions in the pathway glycan biosynthesis; glycogen biosynthesis. Catalyzes the formation of the alpha-1,6-glucosidic linkages in glycogen by scission of a 1,4-alpha-linked oligosaccharide from growing alpha-1,4-glucan chains and the subsequent attachment of the oligosaccharide to the alpha-1,6 position. This Thiobacillus denitrificans (strain ATCC 25259 / T1) protein is 1,4-alpha-glucan branching enzyme GlgB.